The primary structure comprises 553 residues: Urocanate hydratase (553 aa).

NAD(+) contacts are provided by residues 51 to 52 (GG), Gln129, 175 to 177 (GMG), Glu195, Arg200, 241 to 242 (NA), 262 to 266 (QTSAH), 272 to 273 (YL), and Tyr321. The active site involves Cys409. Position 491 (Gly491) interacts with NAD(+).

This sequence belongs to the urocanase family. The cofactor is NAD(+).

The protein localises to the cytoplasm. The catalysed reaction is 4-imidazolone-5-propanoate = trans-urocanate + H2O. It functions in the pathway amino-acid degradation; L-histidine degradation into L-glutamate; N-formimidoyl-L-glutamate from L-histidine: step 2/3. Functionally, catalyzes the conversion of urocanate to 4-imidazolone-5-propionate. The protein is Urocanate hydratase of Sphingopyxis alaskensis (strain DSM 13593 / LMG 18877 / RB2256) (Sphingomonas alaskensis).